Consider the following 110-residue polypeptide: Hydrogenase maturation factor HypA (110 aa).

His-2 is a Ni(2+) binding site. Positions 70, 73, 86, and 89 each coordinate Zn(2+).

This sequence belongs to the HypA/HybF family.

Its function is as follows. Involved in the maturation of [NiFe] hydrogenases. Required for nickel insertion into the metal center of the hydrogenase. This chain is Hydrogenase maturation factor HypA, found in Geobacter sp. (strain M21).